Reading from the N-terminus, the 151-residue chain is Small ribosomal subunit protein uS15 (151 aa).

Over residues methionine 1–arginine 16 the composition is skewed to basic residues. Positions methionine 1–proline 20 are disordered.

This sequence belongs to the universal ribosomal protein uS15 family. Part of the 30S ribosomal subunit.

This is Small ribosomal subunit protein uS15 from Pyrobaculum aerophilum (strain ATCC 51768 / DSM 7523 / JCM 9630 / CIP 104966 / NBRC 100827 / IM2).